The chain runs to 411 residues: Argininosuccinate synthase (411 aa).

Residues 10 to 18 (AYSGGLDTS) and Ala-37 each bind ATP. Residues Tyr-89 and Ser-94 each coordinate L-citrulline. Residue Gly-119 coordinates ATP. L-aspartate contacts are provided by Thr-121, Asn-125, and Asp-126. Asn-125 is a binding site for L-citrulline. Residues Arg-129, Ser-178, Ser-187, Glu-263, and Tyr-275 each contribute to the L-citrulline site.

The protein belongs to the argininosuccinate synthase family. Type 1 subfamily. In terms of assembly, homotetramer.

It is found in the cytoplasm. The catalysed reaction is L-citrulline + L-aspartate + ATP = 2-(N(omega)-L-arginino)succinate + AMP + diphosphate + H(+). It participates in amino-acid biosynthesis; L-arginine biosynthesis; L-arginine from L-ornithine and carbamoyl phosphate: step 2/3. In Aeromonas hydrophila subsp. hydrophila (strain ATCC 7966 / DSM 30187 / BCRC 13018 / CCUG 14551 / JCM 1027 / KCTC 2358 / NCIMB 9240 / NCTC 8049), this protein is Argininosuccinate synthase.